The sequence spans 1347 residues: Protocadherin-11 X-linked (1347 aa).

A signal peptide spans 1–23 (MDLLSGTYIFAVLLACVVFHSGA). The Extracellular portion of the chain corresponds to 24-812 (QEKNYTIREE…VSSPTNDYVK (789 aa)). Cadherin domains are found at residues 26–139 (KNYT…APLF), 140–249 (PATV…HPVF), 250–355 (KETE…VPSI), 362–466 (NPVN…APVF), 467–570 (TQSF…SPVF), 571–673 (THNE…KPVF), and 677–795 (PSNY…APVT). 3 N-linked (GlcNAc...) asparagine glycosylation sites follow: Asn-27, Asn-48, and Asn-54. Asn-344 carries an N-linked (GlcNAc...) asparagine glycan. A glycan (N-linked (GlcNAc...) asparagine) is linked at Asn-553. Asn-773 carries N-linked (GlcNAc...) asparagine glycosylation. The chain crosses the membrane as a helical span at residues 813–833 (ILVAAVAGTITVVVVIFITAV). At 834–1347 (VRCRQAPHLK…DSPIMEEHPL (514 aa)) the chain is on the cytoplasmic side. 3 disordered regions span residues 1057-1091 (LPEG…GYPQ), 1097-1116 (RATP…ESTF), and 1326-1347 (FTPR…EHPL).

It is found in the cell membrane. In terms of biological role, potential calcium-dependent cell-adhesion protein. This chain is Protocadherin-11 X-linked (PCDH11X), found in Gorilla gorilla gorilla (Western lowland gorilla).